Consider the following 832-residue polypeptide: Ventricular zone-expressed PH domain-containing protein homolog 1 (832 aa).

The segment at 201–319 (AELLALMSQL…RYLVSQLANM (119 aa)) is interaction with TGFBR1. A disordered region spans residues 497–519 (DTHGSQLRNSSASHPSIIHSEPE). Residues 499 to 510 (HGSQLRNSSASH) show a composition bias toward polar residues. Residues 663–832 (ESTFPQQKDL…RESREVTTYL (170 aa)) form an interaction with TGFBR1 region. In terms of domain architecture, PH spans 716–818 (QPLIEGKLKE…WLQCINVALA (103 aa)).

Belongs to the MELT/VEPH family. Interacts with TGFBR1.

It is found in the cell membrane. Interacts with TGF-beta receptor type-1 (TGFBR1) and inhibits dissociation of activated SMAD2 from TGFBR1, impeding its nuclear accumulation and resulting in impaired TGF-beta signaling. May also affect FOXO, Hippo and Wnt signaling. The sequence is that of Ventricular zone-expressed PH domain-containing protein homolog 1 (Veph1) from Rattus norvegicus (Rat).